The primary structure comprises 452 residues: Translation initiation factor eIF2B subunit gamma (452 aa).

M1 carries the N-acetylmethionine modification. Phosphoserine is present on S260.

Belongs to the eIF-2B gamma/epsilon subunits family. As to quaternary structure, component of the translation initiation factor 2B (eIF2B) complex which is a heterodecamer of two sets of five different subunits: alpha, beta, gamma, delta and epsilon. Subunits alpha, beta and delta comprise a regulatory subcomplex and subunits epsilon and gamma comprise a catalytic subcomplex. Within the complex, the hexameric regulatory complex resides at the center, with the two heterodimeric catalytic subcomplexes bound on opposite sides.

It localises to the cytoplasm. Its subcellular location is the cytosol. Activated by the chemical integrated stress response (ISR) inhibitor ISRIB which stimulates guanine nucleotide exchange factor activity for both phosphorylated and unphosphorylated eIF2. Its function is as follows. Acts as a component of the translation initiation factor 2B (eIF2B) complex, which catalyzes the exchange of GDP for GTP on the eukaryotic initiation factor 2 (eIF2) complex gamma subunit. Its guanine nucleotide exchange factor activity is repressed when bound to eIF2 complex phosphorylated on the alpha subunit, thereby limiting the amount of methionyl-initiator methionine tRNA available to the ribosome and consequently global translation is repressed. The sequence is that of Translation initiation factor eIF2B subunit gamma (EIF2B3) from Macaca fascicularis (Crab-eating macaque).